A 289-amino-acid chain; its full sequence is Oxaloacetate decarboxylase (289 aa).

S50 provides a ligand contact to substrate. A Mg(2+)-binding site is contributed by D88. Residues R159 and H235 each contribute to the substrate site.

Belongs to the isocitrate lyase/PEP mutase superfamily. Oxaloacetate decarboxylase family. In terms of assembly, homotetramer; dimer of dimers. Requires Mg(2+) as cofactor.

The catalysed reaction is oxaloacetate + H(+) = pyruvate + CO2. Catalyzes the decarboxylation of oxaloacetate into pyruvate. Seems to play a role in maintaining cellular concentrations of bicarbonate and pyruvate. The polypeptide is Oxaloacetate decarboxylase (Pseudomonas syringae pv. tomato (strain ATCC BAA-871 / DC3000)).